Consider the following 296-residue polypeptide: Nucleotide-binding protein RSc0403 (296 aa).

8–15 (GMSGSGKS) serves as a coordination point for ATP. 57 to 60 (DIRS) contacts GTP. The disordered stretch occupies residues 99 to 124 (TRRRHPLSIRNGRPDAGNPPSAAKGP).

This sequence belongs to the RapZ-like family.

Displays ATPase and GTPase activities. The chain is Nucleotide-binding protein RSc0403 from Ralstonia nicotianae (strain ATCC BAA-1114 / GMI1000) (Ralstonia solanacearum).